Consider the following 628-residue polypeptide: MSQIFSFAGENDFYRRGAIYPNPKDASLLLSLGSFADVYFPPSKRSRVVAPTIFSAFEKKPVSIDVLPDECLFEIFRRLSGPQERSACAFVSKQWLTLVSSIRQKEIDVPSKITEDGDDCEGCLSRSLDGKKATDVRLAAIAVGTAGRGGLGKLSIRGSNSAKVSDLGLRSIGRSCPSLGSLSLWNVSTITDNGLLEIAEGCAQLEKLELNRCSTITDKGLVAIAKSCPNLTELTLEACSRIGDEGLLAIARSCSKLKSVSIKNCPLVRDQGIASLLSNTTCSLAKLKLQMLNVTDVSLAVVGHYGLSITDLVLAGLSHVSEKGFWVMGNGVGLQKLNSLTITACQGVTDMGLESVGKGCPNMKKAIISKSPLLSDNGLVSFAKASLSLESLQLEECHRVTQFGFFGSLLNCGEKLKAFSLVNCLSIRDLTTGLPASSHCSALRSLSIRNCPGFGDANLAAIGKLCPQLEDIDLCGLKGITESGFLHLIQSSLVKINFSGCSNLTDRVISAITARNGWTLEVLNIDGCSNITDASLVSIAANCQILSDLDISKCAISDSGIQALASSDKLKLQILSVAGCSMVTDKSLPAIVGLGSTLLGLNLQQCRSISNSTVDFLVERLYKCDILS.

Residues 61 to 109 (PVSIDVLPDECLFEIFRRLSGPQERSACAFVSKQWLTLVSSIRQKEIDV) form the F-box domain.

Part of a SCF (SKP1-cullin-F-box) protein ligase complex. Interacts with CUL1, SKP1A/ASK1, SKP1B/ASK2, ASK11, ASK12, ASK13, ASK18, EIN3, and EIL1. In terms of tissue distribution, ubiquitous.

Its subcellular location is the nucleus. It functions in the pathway protein modification; protein ubiquitination. Component of SCF(EBF1) E3 ubiquitin ligase complexes, which may mediate the ubiquitination and subsequent proteasomal degradation of target proteins (probably including EIN3 and EIL1). Regulator of the ethylene signaling cascade by modulating the stability of EIN3 and EIL1 proteins. Confers insensitivity to ethylene. This Arabidopsis thaliana (Mouse-ear cress) protein is EIN3-binding F-box protein 1 (EBF1).